The following is a 609-amino-acid chain: Replication protein A 70 kDa DNA-binding subunit (609 aa).

Positions 112–164 (IGNPHPYNDGQGPPQPAAPAPASAPPPSKPQNISAPPPPSMNRGASKLFGGGS) are disordered. Residues 124–151 (PPQPAAPAPASAPPPSKPQNISAPPPPS) are compositionally biased toward pro residues. Residues 189-273 (WTVRARVTNK…VKNDYEMTFN (85 aa)) constitute a DNA-binding region (OB). The segment at 472–494 (CPSQDCNKKVIDQQNGLFRCEKC) adopts a C4-type zinc-finger fold.

It belongs to the replication factor A protein 1 family. Component of the heterotrimeric canonical replication protein A complex (RPA). Interacts with rpain-a.

It is found in the nucleus. The protein localises to the PML body. As part of the heterotrimeric replication protein A complex (RPA/RP-A), binds and stabilizes single-stranded DNA intermediates, that form during DNA replication or upon DNA stress. It prevents their reannealing and in parallel, recruits and activates different proteins and complexes involved in DNA metabolism. Thereby, it plays an essential role both in DNA replication and the cellular response to DNA damage. This is Replication protein A 70 kDa DNA-binding subunit (rpa1) from Xenopus tropicalis (Western clawed frog).